Reading from the N-terminus, the 275-residue chain is NH(3)-dependent NAD(+) synthetase (275 aa).

Position 46–53 (46–53 (GISGGQDS)) interacts with ATP. Asp52 contributes to the Mg(2+) binding site. Arg140 serves as a coordination point for deamido-NAD(+). Thr160 is an ATP binding site. A Mg(2+)-binding site is contributed by Glu165. Deamido-NAD(+)-binding residues include Lys173 and Asp180. 2 residues coordinate ATP: Lys189 and Thr211. 260–261 (HK) serves as a coordination point for deamido-NAD(+).

Belongs to the NAD synthetase family. In terms of assembly, homodimer.

It catalyses the reaction deamido-NAD(+) + NH4(+) + ATP = AMP + diphosphate + NAD(+) + H(+). Its pathway is cofactor biosynthesis; NAD(+) biosynthesis; NAD(+) from deamido-NAD(+) (ammonia route): step 1/1. In terms of biological role, catalyzes the ATP-dependent amidation of deamido-NAD to form NAD. Uses ammonia as a nitrogen source. The sequence is that of NH(3)-dependent NAD(+) synthetase from Salmonella paratyphi A (strain ATCC 9150 / SARB42).